The chain runs to 351 residues: Phospho-N-acetylmuramoyl-pentapeptide-transferase (351 aa).

Transmembrane regions (helical) follow at residues 17 to 37, 62 to 82, 85 to 105, 124 to 144, 161 to 181, 190 to 210, 230 to 250, 254 to 274, 279 to 299, and 328 to 348; these read MAYA…HIIL, GIPT…LVFW, ILNV…FLGF, FKIY…YYFG, IDLG…ASNS, GLAI…AYLT, LVIF…FNAY, IMMG…AALI, ILFS…IIQV, and QVVI…LSTI.

This sequence belongs to the glycosyltransferase 4 family. MraY subfamily. It depends on Mg(2+) as a cofactor.

It is found in the cell inner membrane. The enzyme catalyses UDP-N-acetyl-alpha-D-muramoyl-L-alanyl-gamma-D-glutamyl-meso-2,6-diaminopimeloyl-D-alanyl-D-alanine + di-trans,octa-cis-undecaprenyl phosphate = di-trans,octa-cis-undecaprenyl diphospho-N-acetyl-alpha-D-muramoyl-L-alanyl-D-glutamyl-meso-2,6-diaminopimeloyl-D-alanyl-D-alanine + UMP. It functions in the pathway cell wall biogenesis; peptidoglycan biosynthesis. Catalyzes the initial step of the lipid cycle reactions in the biosynthesis of the cell wall peptidoglycan: transfers peptidoglycan precursor phospho-MurNAc-pentapeptide from UDP-MurNAc-pentapeptide onto the lipid carrier undecaprenyl phosphate, yielding undecaprenyl-pyrophosphoryl-MurNAc-pentapeptide, known as lipid I. This is Phospho-N-acetylmuramoyl-pentapeptide-transferase from Borrelia garinii subsp. bavariensis (strain ATCC BAA-2496 / DSM 23469 / PBi) (Borreliella bavariensis).